Here is a 178-residue protein sequence, read N- to C-terminus: DNA-directed RNA polymerase subunit beta (178 aa).

The protein belongs to the RNA polymerase beta chain family. In terms of assembly, the RNAP catalytic core consists of 2 alpha, 1 beta, 1 beta' and 1 omega subunit. When a sigma factor is associated with the core the holoenzyme is formed, which can initiate transcription.

The enzyme catalyses RNA(n) + a ribonucleoside 5'-triphosphate = RNA(n+1) + diphosphate. Functionally, DNA-dependent RNA polymerase catalyzes the transcription of DNA into RNA using the four ribonucleoside triphosphates as substrates. This is DNA-directed RNA polymerase subunit beta (rpoB) from Liberibacter asiaticus (Citrus greening disease).